Here is a 470-residue protein sequence, read N- to C-terminus: Probable G-protein coupled receptor 152 (470 aa).

The segment at 1-25 (MDTTMEADLGATGHRPRTELDDEDS) is disordered. Residues 1–33 (MDTTMEADLGATGHRPRTELDDEDSYPQGGWDT) lie on the Extracellular side of the membrane. The helical transmembrane segment at 34-54 (VFLVALLLLGLPANGLMAWLA) threads the bilayer. The Cytoplasmic portion of the chain corresponds to 55–65 (GSQARHGAGTR). Residues 66–86 (LALLLLSLALSDFLFLAAAAF) traverse the membrane as a helical segment. Over 87–105 (QILEIRHGGHWPLGTAACR) the chain is Extracellular. C104 and C182 form a disulfide bridge. Residues 106-126 (FYYFLWGVSYSSGLFLLAALS) traverse the membrane as a helical segment. The Cytoplasmic portion of the chain corresponds to 127 to 148 (LDRCLLALCPHWYPGHRPVRLP). Residues 149 to 169 (LWVCAGVWVLATLFSVPWLVF) traverse the membrane as a helical segment. Residues 170 to 194 (PEAAVWWYDLVICLDFWDSEELSLR) lie on the Extracellular side of the membrane. A helical transmembrane segment spans residues 195–215 (MLEVLGGFLPFLLLLVCHVLT). At 216–257 (QATACRTCHRQQQPAACRGFARVARTILSAYVVLRLPYQLAQ) the chain is on the cytoplasmic side. A helical membrane pass occupies residues 258–278 (LLYLAFLWDVYSGYLLWEALV). Topologically, residues 279–281 (YSD) are extracellular. Residues 282–302 (YLILLNSCLSPFLCLMASADL) traverse the membrane as a helical segment. At 303 to 470 (RTLLRSVLSS…PEAAPGAGPT (168 aa)) the chain is on the cytoplasmic side. Positions 322–470 (PGSFTPTEPQ…PEAAPGAGPT (149 aa)) are disordered. 2 stretches are compositionally biased toward polar residues: residues 325–335 (FTPTEPQTQLD) and 348–414 (AQSQ…NVQT). Residues 415–425 (PAPAASSVPSP) show a composition bias toward low complexity.

This sequence belongs to the G-protein coupled receptor 1 family.

It localises to the cell membrane. Orphan receptor. This chain is Probable G-protein coupled receptor 152 (GPR152), found in Homo sapiens (Human).